The sequence spans 183 residues: Dual-action ribosomal maturation protein DarP (183 aa).

It belongs to the DarP family.

It is found in the cytoplasm. Functionally, member of a network of 50S ribosomal subunit biogenesis factors which assembles along the 30S-50S interface, preventing incorrect 23S rRNA structures from forming. Promotes peptidyl transferase center (PTC) maturation. The sequence is that of Dual-action ribosomal maturation protein DarP from Salmonella paratyphi A (strain ATCC 9150 / SARB42).